Here is a 517-residue protein sequence, read N- to C-terminus: Cytochrome P450 monooxygenase cdmJ (517 aa).

Residues 15-35 (YMWSLTLFALCLSAILMFPFL) traverse the membrane as a helical segment. Residue N404 is glycosylated (N-linked (GlcNAc...) asparagine). Residue C451 participates in heme binding.

This sequence belongs to the cytochrome P450 family. Heme is required as a cofactor.

It localises to the membrane. The catalysed reaction is 3-hydroxypentacecilide A + NADPH + O2 + H(+) = chrodrimanin F + NADP(+) + H2O. It carries out the reaction chrodrimanin C + NADPH + O2 + H(+) = chrodrimanin H + NADP(+) + H2O. It catalyses the reaction verruculide A + NADPH + O2 + H(+) = chrodrimanin E + NADP(+) + H2O. The enzyme catalyses chrodrimanin T + NADPH + O2 + H(+) = chrodrimanin A + NADP(+) + H2O. It participates in secondary metabolite biosynthesis; terpenoid biosynthesis. Cytochrome P450 monooxygenase; part of the gene cluster that mediates the biosynthesis of chrodrimanin B, a meroterpenoid that acts as a potent blocker of insect GABA-gated chloride channels. The first step of the pathway is the biosynthesis of 6-hydroxymellein by the polyketide synthase cdmE. The prenyltransferase cdmH acts as a 6-hydroxymellein 5-farnesyltransferase and produces the hydrophobic metabolite verruculide C. The FAD-dependent monooxygenase cdmI further converts verruculide C into verruculide B. The terpene cyclase cdmG then produced the pentacyclic molecule 3-hydroxypentacecilide A, the backbone structure of chrodrimanin B, via folding the farnesyl moiety of the substrate into the chair-boat conformation. The short-chain dehydrogenase/reductase cdmF functions as the 3-OH dehydrogenase that oxidizes the C-3 hydroxyl group of 3-hydroxypentacecilide A and produces chrodrimanin C, the dehydrogenated product of 3-hydroxypentacecilide A. The cytochrome P450 monooxygenase cdmJ then accepts both 3-hydroxypentacecilide A and chrodrimanin C and functions as a C-7-beta-hydroxylase to produce respectively chrodrimanin H and chrodrimanin F. The dioxygenase cdmA accepts chrodrimanin H to afford chrodrimanin E, which is further transformed to chrodrimanin A by the dioxygenase cdmD. CdmA can also accept chrodrimanin C as substrate to convert it into verruculide A, which is further converted into chrodrimanin T by cdmD. The last step of the biosynthesis is proposed to be performed by the acetyltransferase cdmC which acetylates chrodrimanin A to yield chrodrimanin B. The pathway may also lead to the production of additional shunt products, including chrodrimanins T and U. The protein is Cytochrome P450 monooxygenase cdmJ of Talaromyces verruculosus (Penicillium verruculosum).